Reading from the N-terminus, the 217-residue chain is Somatotropin (217 aa).

The signal sequence occupies residues 1–26 (MAAGSRTSLLLAFALLCLPWLQEGSA). Residue His44 participates in Zn(2+) binding. Cys79 and Cys191 are disulfide-bonded. Phosphoserine is present on Ser132. Zn(2+) is bound at residue Glu200. Cysteines 208 and 215 form a disulfide.

The protein belongs to the somatotropin/prolactin family.

Its subcellular location is the secreted. Functionally, plays an important role in growth control. Its major role in stimulating body growth is to stimulate the liver and other tissues to secrete IGF1. It stimulates both the differentiation and proliferation of myoblasts. It also stimulates amino acid uptake and protein synthesis in muscle and other tissues. The polypeptide is Somatotropin (GH1) (Macaca mulatta (Rhesus macaque)).